Consider the following 157-residue polypeptide: Thiosulfate sulfurtransferase/rhodanese-like domain-containing protein 3 (157 aa).

In terms of domain architecture, Rhodanese spans 52–154 (NSKDIMLIDV…WVTYEISEEK (103 aa)). Position 96 is an N6-succinyllysine (Lys-96). Catalysis depends on Cys-114, which acts as the Cysteine persulfide intermediate.

The polypeptide is Thiosulfate sulfurtransferase/rhodanese-like domain-containing protein 3 (Tstd3) (Mus musculus (Mouse)).